The primary structure comprises 550 residues: Hydroxylamine reductase (550 aa).

Residues cysteine 3, cysteine 6, cysteine 18, and cysteine 25 each coordinate [2Fe-2S] cluster. Residues histidine 249, glutamate 273, cysteine 317, cysteine 405, cysteine 433, cysteine 458, glutamate 492, and lysine 494 each coordinate hybrid [4Fe-2O-2S] cluster. Residue cysteine 405 is modified to Cysteine persulfide.

The protein belongs to the HCP family. [2Fe-2S] cluster is required as a cofactor. Requires hybrid [4Fe-2O-2S] cluster as cofactor.

The protein resides in the cytoplasm. It catalyses the reaction A + NH4(+) + H2O = hydroxylamine + AH2 + H(+). Its function is as follows. Catalyzes the reduction of hydroxylamine to form NH(3) and H(2)O. The polypeptide is Hydroxylamine reductase (Escherichia coli O139:H28 (strain E24377A / ETEC)).